The following is a 194-amino-acid chain: Alkyl hydroperoxide reductase AhpD (194 aa).

Residue cysteine 132 is the Proton donor of the active site. Residues cysteine 132 and cysteine 135 are joined by a disulfide bond. Catalysis depends on cysteine 135, which acts as the Cysteine sulfenic acid (-SOH) intermediate.

Belongs to the AhpD family.

It catalyses the reaction N(6)-[(R)-dihydrolipoyl]-L-lysyl-[lipoyl-carrier protein] + a hydroperoxide = N(6)-[(R)-lipoyl]-L-lysyl-[lipoyl-carrier protein] + an alcohol + H2O. Its function is as follows. Antioxidant protein with alkyl hydroperoxidase activity. Required for the reduction of the AhpC active site cysteine residues and for the regeneration of the AhpC enzyme activity. The protein is Alkyl hydroperoxide reductase AhpD of Koribacter versatilis (strain Ellin345).